The following is a 272-amino-acid chain: Dermonecrotic toxin SpeSicTox-betaIB1a (272 aa).

The active site involves histidine 5. 2 residues coordinate Mg(2+): glutamate 25 and aspartate 27. Histidine 41 functions as the Nucleophile in the catalytic mechanism. Disulfide bonds link cysteine 45-cysteine 51 and cysteine 47-cysteine 191. Aspartate 85 contacts Mg(2+).

The protein belongs to the arthropod phospholipase D family. Class II subfamily. Mg(2+) serves as cofactor. Expressed by the venom gland.

It localises to the secreted. It catalyses the reaction an N-(acyl)-sphingosylphosphocholine = an N-(acyl)-sphingosyl-1,3-cyclic phosphate + choline. It carries out the reaction an N-(acyl)-sphingosylphosphoethanolamine = an N-(acyl)-sphingosyl-1,3-cyclic phosphate + ethanolamine. The enzyme catalyses a 1-acyl-sn-glycero-3-phosphocholine = a 1-acyl-sn-glycero-2,3-cyclic phosphate + choline. The catalysed reaction is a 1-acyl-sn-glycero-3-phosphoethanolamine = a 1-acyl-sn-glycero-2,3-cyclic phosphate + ethanolamine. Dermonecrotic toxins cleave the phosphodiester linkage between the phosphate and headgroup of certain phospholipids (sphingolipid and lysolipid substrates), forming an alcohol (often choline) and a cyclic phosphate. This toxin acts on sphingomyelin (SM). It may also act on ceramide phosphoethanolamine (CPE), lysophosphatidylcholine (LPC) and lysophosphatidylethanolamine (LPE), but not on lysophosphatidylserine (LPS), and lysophosphatidylglycerol (LPG). It acts by transphosphatidylation, releasing exclusively cyclic phosphate products as second products. Induces dermonecrosis, hemolysis, increased vascular permeability, edema, inflammatory response, and platelet aggregation. This Sicarius peruensis (Six-eyed sand spider) protein is Dermonecrotic toxin SpeSicTox-betaIB1a.